Consider the following 263-residue polypeptide: MGKLTGKTALITGALQGIGEGIARTFARHGANLILLDISPEIEKLADELCGRGHRCTAVVADVRDPASVAAAIKRAKEKEGRIDILVNNAGVCRLGSFLDMSDDDRDFHIDINIKGVWNVTKAVLPEMIARKDGRIVMMSSVTGDMVADPGETAYALTKAAIVGLTKSLAVEYAQSGIRVNAICPGYVRTPMAESIARQSNPEDPESVLTEMAKAIPLRRLADPLEVGELAAFLASDESSYLTGTQNVIDGGSTLPETVSVGI.

Position 10 to 32 (10 to 32 (LITGALQGIGEGIARTFARHGAN)) interacts with NAD(+). Substrate is bound at residue S141. Y155 acts as the Proton acceptor in catalysis.

It belongs to the short-chain dehydrogenases/reductases (SDR) family.

This chain is Oxidoreductase UcpA (ucpA), found in Escherichia coli O157:H7.